A 1506-amino-acid polypeptide reads, in one-letter code: Condensin-2 complex subunit D3 (1506 aa).

A disordered region spans residues 154 to 194 (SNLTQKRKKDHSKSSKDNYRKSRKRGKPPRKEDYQVDELSR). HEAT repeat units follow at residues 442-476 (HKFF…LELS), 532-567 (PGER…LKHC), and 574-605 (QDLL…VMAQ). Phosphoserine is present on Ser-562. The span at 884 to 897 (SDHLPSSQGTTDAL) shows a compositional bias: polar residues. A disordered region spans residues 884-908 (SDHLPSSQGTTDALDSQPPFQPRSS). The HEAT 4 repeat unit spans residues 968-1004 (TVMVDNYIPNISVCLKDSDPFIRKQTLVLLTNLLQEE). Residues 1213-1270 (ALRELMNYLREVMQDYRDEINDFFAVDKQLASELEYDMKKYNEQLAQEQALTEHANAT) are a coiled coil. The tract at residues 1317–1353 (QDNADVPPTQSRPSAPRSNFTPTLPPISENGPLKIMS) is disordered. Over residues 1324–1338 (PTQSRPSAPRSNFTP) the composition is skewed to polar residues. 4 positions are modified to phosphoserine: Ser-1359, Ser-1368, Ser-1381, and Ser-1393. Disordered regions lie at residues 1385 to 1412 (LPFN…ESDR) and 1473 to 1506 (PQSP…KTAN). The span at 1393–1405 (SPENPSSHESSLS) shows a compositional bias: low complexity. The segment covering 1492 to 1506 (SSRRSLRKAPLKTAN) has biased composition (basic residues).

Component of the condensin-2 complex, which contains the SMC2 and SMC4 heterodimer, and 3 non SMC subunits that probably regulate the complex: NCAPH2, NCAPD3 and NCAPG2.

Its subcellular location is the nucleus. In terms of biological role, regulatory subunit of the condensin-2 complex, a complex which establishes mitotic chromosome architecture and is involved in physical rigidity of the chromatid axis. May promote the resolution of double-strand DNA catenanes (intertwines) between sister chromatids. Condensin-mediated compaction likely increases tension in catenated sister chromatids, providing directionality for type II topoisomerase-mediated strand exchanges toward chromatid decatenation. Specifically required for decatenation of centromeric ultrafine DNA bridges during anaphase. Early in neurogenesis, may play an essential role to ensure accurate mitotic chromosome condensation in neuron stem cells, ultimately affecting neuron pool and cortex size. The polypeptide is Condensin-2 complex subunit D3 (Ncapd3) (Mus musculus (Mouse)).